A 539-amino-acid chain; its full sequence is Phosphoenolpyruvate carboxykinase (ATP) (539 aa).

Substrate-binding residues include Arg-64, Tyr-206, and Lys-212. Residues Lys-212, His-231, and 247-255 contribute to the ATP site; that span reads GLSGTGKTT. Mn(2+)-binding residues include Lys-212 and His-231. Asp-268 is a binding site for Mn(2+). ATP contacts are provided by residues Glu-296, Arg-332, 448–449, and Thr-454; that span reads RI. Substrate is bound at residue Arg-332.

Belongs to the phosphoenolpyruvate carboxykinase (ATP) family. In terms of assembly, monomer. The cofactor is Mn(2+).

Its subcellular location is the cytoplasm. The catalysed reaction is oxaloacetate + ATP = phosphoenolpyruvate + ADP + CO2. It functions in the pathway carbohydrate biosynthesis; gluconeogenesis. Involved in the gluconeogenesis. Catalyzes the conversion of oxaloacetate (OAA) to phosphoenolpyruvate (PEP) through direct phosphoryl transfer between the nucleoside triphosphate and OAA. In Hamiltonella defensa subsp. Acyrthosiphon pisum (strain 5AT), this protein is Phosphoenolpyruvate carboxykinase (ATP).